Consider the following 149-residue polypeptide: Small ribosomal subunit protein uS11z (149 aa).

Positions 130-149 are disordered; that stretch reads VTPVPTDSTRRKGGRRGRRL. Residues 140–149 are compositionally biased toward basic residues; the sequence is RKGGRRGRRL.

Belongs to the universal ribosomal protein uS11 family.

This is Small ribosomal subunit protein uS11z from Zea mays (Maize).